The sequence spans 160 residues: Transmembrane protein 191A (160 aa).

Residues 24-44 traverse the membrane as a helical segment; that stretch reads FCFPLDFVSNLFWIFASKFII.

This sequence belongs to the TMEM191 family.

The protein localises to the membrane. In Homo sapiens (Human), this protein is Transmembrane protein 191A (TMEM191A).